A 336-amino-acid chain; its full sequence is tRNA (guanine(37)-N(1))-methyltransferase Trm5b (336 aa).

S-adenosyl-L-methionine-binding positions include Arg186, Asp223–Ile224, Asp251–Val252, and Asn265.

The protein belongs to the class I-like SAM-binding methyltransferase superfamily. TRM5/TYW2 family. As to quaternary structure, monomer.

It localises to the cytoplasm. It carries out the reaction guanosine(37) in tRNA + S-adenosyl-L-methionine = N(1)-methylguanosine(37) in tRNA + S-adenosyl-L-homocysteine + H(+). Its function is as follows. Specifically methylates the N1 position of guanosine-37 in various tRNAs. The sequence is that of tRNA (guanine(37)-N(1))-methyltransferase Trm5b (trm5b) from Methanocaldococcus jannaschii (strain ATCC 43067 / DSM 2661 / JAL-1 / JCM 10045 / NBRC 100440) (Methanococcus jannaschii).